Consider the following 709-residue polypeptide: MGPRIGPAGEVPQVPDKETKATMGTENTPGGKASPDPQDVRPSVFHNIKLFVLCHSLLQLAQLMISGYLKSSISTVEKRFGLSSQTSGLLASFNEVGNTALIVFVSYFGSRVHRPRMIGYGAILVALAGLLMTLPHFISEPYRYDNTSPEDMPQDFKASLCLPTTSAPASAPSNGNCSSYTETQHLSVVGIMFVAQTLLGVGGVPIQPFGISYIDDFAHNSNSPLYLGILFAVTMMGPGLAFGLGSLMLRLYVDINQMPEGGISLTIKDPRWVGAWWLGFLIAAGAVALAAIPYFFFPKEMPKEKRELQFRRKVLAVTDSPARKGKDSPSKQSPGESTKKQDGLVQIAPNLTVIQFIKVFPRVLLQTLRHPIFLLVVLSQVCLSSMAAGMATFLPKFLERQFSITASYANLLIGCLSFPSVIVGIVVGGVLVKRLHLGPVGCGALCLLGMLLCLFFSLPLFFIGCSSHQIAGITHQTSAHPGLELSPSCMEACSCPLDGFNPVCDPSTRVEYITPCHAGCSSWVVQDALDNSQVFYTNCSCVVEGNPVLAGSCDSTCSHLVVPFLLLVSLGSALACLTHTPSFMLILRGVKKEDKTLAVGIQFMFLRILAWMPSPVIHGSAIDTTCVHWALSCGRRAVCRYYNNDLLRNRFIGLQFFFKTGSVICFALVLAVLRQQDKEARTKESRSSPAVEQQLLVSGPGKKPEDSRV.

Residues 1-38 are disordered; it reads MGPRIGPAGEVPQVPDKETKATMGTENTPGGKASPDPQ. Over 1-49 the chain is Cytoplasmic; it reads MGPRIGPAGEVPQVPDKETKATMGTENTPGGKASPDPQDVRPSVFHNIK. The residue at position 34 (Ser-34) is a Phosphoserine. Residues 50–69 traverse the membrane as a helical segment; sequence LFVLCHSLLQLAQLMISGYL. The segment at 51-69 is required for E1S and taurocholate transport; required for transporter stability; the sequence is FVLCHSLLQLAQLMISGYL. At 70–88 the chain is on the extracellular side; sequence KSSISTVEKRFGLSSQTSG. A helical membrane pass occupies residues 89-109; that stretch reads LLASFNEVGNTALIVFVSYFG. Residues 110-115 are Cytoplasmic-facing; the sequence is SRVHRP. A helical membrane pass occupies residues 116-140; the sequence is RMIGYGAILVALAGLLMTLPHFISE. Topologically, residues 141 to 185 are extracellular; the sequence is PYRYDNTSPEDMPQDFKASLCLPTTSAPASAPSNGNCSSYTETQH. N-linked (GlcNAc...) asparagine glycosylation is present at Asn-176. The chain crosses the membrane as a helical span at residues 186–215; it reads LSVVGIMFVAQTLLGVGGVPIQPFGISYID. Over 216-234 the chain is Cytoplasmic; that stretch reads DFAHNSNSPLYLGILFAVT. The helical transmembrane segment at 235–255 threads the bilayer; it reads MMGPGLAFGLGSLMLRLYVDI. Residues 256-273 are Extracellular-facing; it reads NQMPEGGISLTIKDPRWV. Residues 274–298 form a helical membrane-spanning segment; the sequence is GAWWLGFLIAAGAVALAAIPYFFFP. Residues 299 to 366 are Cytoplasmic-facing; it reads KEMPKEKREL…IKVFPRVLLQ (68 aa). A Phosphothreonine modification is found at Thr-318. The disordered stretch occupies residues 319-342; sequence DSPARKGKDSPSKQSPGESTKKQD. Ser-320 is subject to Phosphoserine. Residues 367–388 traverse the membrane as a helical segment; the sequence is TLRHPIFLLVVLSQVCLSSMAA. The Extracellular segment spans residues 389-408; that stretch reads GMATFLPKFLERQFSITASY. A helical transmembrane segment spans residues 409-432; it reads ANLLIGCLSFPSVIVGIVVGGVLV. At 433–436 the chain is on the cytoplasmic side; that stretch reads KRLH. The chain crosses the membrane as a helical span at residues 437 to 460; sequence LGPVGCGALCLLGMLLCLFFSLPL. Topologically, residues 461 to 564 are extracellular; sequence FFIGCSSHQI…STCSHLVVPF (104 aa). Positions 483 to 543 constitute a Kazal-like domain; the sequence is LELSPSCMEA…VFYTNCSCVV (61 aa). Disulfide bonds link Cys-489-Cys-520, Cys-495-Cys-516, and Cys-504-Cys-541. Asn-538 carries an N-linked (GlcNAc...) asparagine glycan. A helical membrane pass occupies residues 565–587; sequence LLLVSLGSALACLTHTPSFMLIL. At 588–596 the chain is on the cytoplasmic side; it reads RGVKKEDKT. The helical transmembrane segment at 597 to 622 threads the bilayer; the sequence is LAVGIQFMFLRILAWMPSPVIHGSAI. The Extracellular segment spans residues 623–655; that stretch reads DTTCVHWALSCGRRAVCRYYNNDLLRNRFIGLQ. Residues 656–673 form a helical membrane-spanning segment; sequence FFFKTGSVICFALVLAVL. Topologically, residues 674 to 709 are cytoplasmic; it reads RQQDKEARTKESRSSPAVEQQLLVSGPGKKPEDSRV. The segment at 679–709 is disordered; it reads EARTKESRSSPAVEQQLLVSGPGKKPEDSRV.

Belongs to the organo anion transporter (TC 2.A.60) family. As to expression, strongly expressed in the liver, at the sinusoidal membrane of the hepatocytes. Expressed in the kidney. Expressed in placental trophoblasts and syncytiotrophoblast. Expressed in the small intestine. Expressed in the blood-brain barrier, in endothelial cells of brain capillaries. Expressed in the retina, in the inner nuclear layer and the inner plexiform layer. Expressed in skelettal muscles. In testis, primarily localized to the basal membrane of Sertoli cells and weakly expressed within the tubules. Also expressed in pancreas, lung, heart, colon, ovary and spleen. Expressed in fetal brain, heart, kidney, liver, lung, skeletal muscle, spleen and pancreas. Highest expression in brain. Predominant isoform compared to isoform 3 in small intestine duodenum, kidney, placenta, and skeletal muscle. In terms of tissue distribution, predominant isoform compared to isoform 1 in liver. Also expressed in small intestine duodenum, kidney, brain, placenta, and skeletal muscle.

It localises to the cell membrane. The protein resides in the basal cell membrane. It is found in the basolateral cell membrane. Its subcellular location is the apical cell membrane. It catalyses the reaction dehydroepiandrosterone 3-sulfate(out) = dehydroepiandrosterone 3-sulfate(in). It carries out the reaction estrone 3-sulfate(out) = estrone 3-sulfate(in). The catalysed reaction is estrone 3-sulfate(out) + hydrogencarbonate(in) = estrone 3-sulfate(in) + hydrogencarbonate(out). The enzyme catalyses taurocholate(out) = taurocholate(in). It catalyses the reaction coproporphyrin III(out) = coproporphyrin III(in). It carries out the reaction substance P(out) = substance P(in). The catalysed reaction is pregnenolone sulfate(out) = pregnenolone sulfate(in). The enzyme catalyses prostaglandin E2(out) = prostaglandin E2(in). It catalyses the reaction prostaglandin D2(out) = prostaglandin D2(in). It carries out the reaction L-thyroxine(out) = L-thyroxine(in). With respect to regulation, E1S, DHEA-S and PregS transports are regulated by steroid hormones. In the case of testosterone, transport of E1S and DHEA-S was inhibited, whereas progesterone stimulated E1S, DHEA-S and PregS uptake. Progesterone stimulates high-affinity uptake of E1S whereas it inhibits low-affinity uptake of E1S. Progesterone doesn't affect the uptake of PGE2. In terms of biological role, mediates the Na(+)-independent transport of steroid sulfate conjugates and other specific organic anions. Responsible for the transport of estrone 3-sulfate (E1S) through the basal membrane of syncytiotrophoblast, highlighting a potential role in the placental absorption of fetal-derived sulfated steroids including the steroid hormone precursor dehydroepiandrosterone sulfate (DHEA-S). Also facilitates the uptake of sulfated steroids at the basal/sinusoidal membrane of hepatocytes, therefore accounting for the major part of organic anions clearance of liver. Mediates the intestinal uptake of sulfated steroids. Mediates the uptake of the neurosteroids DHEA-S and pregnenolone sulfate (PregS) into the endothelial cells of the blood-brain barrier as the first step to enter the brain. Also plays a role in the reuptake of neuropeptides such as substance P/TAC1 and vasoactive intestinal peptide/VIP released from retinal neurons. May act as a heme transporter that promotes cellular iron availability via heme oxygenase/HMOX2 and independently of TFRC. Also transports heme by-product coproporphyrin III (CPIII), and may be involved in their hepatic disposition. Mediates the uptake of other substrates such as prostaglandins D2 (PGD2), E1 (PGE1) and E2 (PGE2), taurocholate, L-thyroxine, leukotriene C4 and thromboxane B2. May contribute to regulate the transport of organic compounds in testis across the blood-testis-barrier. Shows a pH-sensitive substrate specificity which may be ascribed to the protonation state of the binding site and leads to a stimulation of substrate transport in an acidic microenvironment. The exact transport mechanism has not been yet deciphered but most likely involves an anion exchange, coupling the cellular uptake of organic substrate with the efflux of an anionic compound. Hydrogencarbonate/HCO3(-) acts as a probable counteranion that exchanges for organic anions. Cytoplasmic glutamate may also act as counteranion in the placenta. An inwardly directed proton gradient has also been proposed as the driving force of E1S uptake with a (H(+):E1S) stoichiometry of (1:1). Has estrone 3-sulfate (E1S) transport activity comparable with the full-length isoform 1. This Homo sapiens (Human) protein is Solute carrier organic anion transporter family member 2B1.